A 304-amino-acid polypeptide reads, in one-letter code: Olfactory receptor 8G2 (304 aa).

Residues 1–41 (MVFLSSVETDQRKMSAGNHSSVTEFILAGLSEQPELQLRLF) lie on the Extracellular side of the membrane. N-linked (GlcNAc...) asparagine glycosylation occurs at asparagine 18. A helical membrane pass occupies residues 42–62 (LLFLGIYVVTVVGNLSMITLI). Topologically, residues 63–69 (GLSSHLH) are cytoplasmic. A helical transmembrane segment spans residues 70 to 90 (TPMYYFLSGLSFIDLCHSTII). The Extracellular segment spans residues 91–110 (TPKMLVNFVTEKNIISYPEC). Residues cysteine 110 and cysteine 192 are joined by a disulfide bond. The helical transmembrane segment at 111 to 130 (MTQLYFFLIFAIAECHMLAV) threads the bilayer. At 131 to 154 (TAYDRYVAICSPLLYNVIMSYHHC) the chain is on the cytoplasmic side. The chain crosses the membrane as a helical span at residues 155-175 (FWLTVGVYVLGILGSTIHTGF). Over 176 to 193 (MLRLFLCKTNVINHYFCD) the chain is Extracellular. Residues 194 to 214 (LFPLLGLSCSSTYINELLVLV) form a helical membrane-spanning segment. At 215 to 217 (LSA) the chain is on the cytoplasmic side. A helical transmembrane segment spans residues 218–238 (FNILTPALTILASYIFIIASI). Residues 239–257 (LRIRSTEGRSKAFSTCSSH) are Extracellular-facing. Residues 258 to 278 (ILAVAVFFGSAAFMYLQPSSV) traverse the membrane as a helical segment. Residues 279-304 (SSMDQRKVSSVFYTTIVPMLNPQSIA) lie on the Cytoplasmic side of the membrane.

Belongs to the G-protein coupled receptor 1 family.

The protein localises to the cell membrane. Its function is as follows. Odorant receptor. In Homo sapiens (Human), this protein is Olfactory receptor 8G2.